Here is a 572-residue protein sequence, read N- to C-terminus: Probable cysteine--tRNA ligase, mitochondrial (572 aa).

C81 is a binding site for Zn(2+). Residue G82 coordinates L-cysteine. Positions 83-93 (PTVYDHAHLGH) match the 'HIGH' region motif. T122 contacts L-cysteine. A 'KIIK' region motif is present at residues 127 to 130 (KIIK). Zn(2+) contacts are provided by C260, H285, and E289. Residue H285 participates in L-cysteine binding. The 'KMSKS' region motif lies at 320-324 (KMSKS). ATP is bound at residue K323.

It belongs to the class-I aminoacyl-tRNA synthetase family. It depends on Zn(2+) as a cofactor.

It is found in the mitochondrion. The enzyme catalyses tRNA(Cys) + L-cysteine + ATP = L-cysteinyl-tRNA(Cys) + AMP + diphosphate. The catalysed reaction is 2 L-cysteine = S-sulfanyl-L-cysteine + L-alanine. It catalyses the reaction S-sulfanyl-L-cysteine + L-cysteine = S-disulfanyl-L-cysteine + L-alanine. It carries out the reaction S-sulfanyl-L-cysteine + tRNA(Cys) + ATP = (S)-sulfanyl-L-cysteinyl-tRNA(Cys) + AMP + diphosphate. The enzyme catalyses S-disulfanyl-L-cysteine + tRNA(Cys) + ATP = (S)-disulfanyl-L-cysteinyl-tRNA(Cys) + AMP + diphosphate. Its function is as follows. Mitochondrial cysteine-specific aminoacyl-tRNA synthetase that catalyzes the ATP-dependent ligation of cysteine to tRNA(Cys). In terms of biological role, in addition to its role as an aminoacyl-tRNA synthetase, has also cysteine persulfide synthase activity. Produces reactive persulfide species such as cysteine persulfide (CysSSH) from substrate cysteine and mediate direct incorporation of CysSSH into proteins during translations, resulting in protein persulfides and polysulfides. CysSSHs behave as potent antioxidants and cellular protectants. The sequence is that of Probable cysteine--tRNA ligase, mitochondrial (cars2) from Xenopus tropicalis (Western clawed frog).